Here is a 100-residue protein sequence, read N- to C-terminus: Large ribosomal subunit protein bL27 (100 aa).

The propeptide occupies 1–9 (MLSINLSLC).

The protein belongs to the bacterial ribosomal protein bL27 family. The N-terminus is cleaved by ribosomal processing cysteine protease Prp.

The protein is Large ribosomal subunit protein bL27 of Clostridium acetobutylicum (strain ATCC 824 / DSM 792 / JCM 1419 / IAM 19013 / LMG 5710 / NBRC 13948 / NRRL B-527 / VKM B-1787 / 2291 / W).